We begin with the raw amino-acid sequence, 184 residues long: MSDILSETRSRMKKSIESLSRELATINAGRANSNLLAGVKVDYYGAPTPVQQLASINVPEPRLLVVSPYDKTSLSDIERAINAANLGVNPSSDGEVIRIMVPALTEERRKELVKDVKKMGENAKVSIRNIRRDSNDDLKKDEKEGVISEDELRTGTDDVQKITDESIKEVDKVLEEKEKDIMSV.

It belongs to the RRF family.

Its subcellular location is the cytoplasm. Functionally, responsible for the release of ribosomes from messenger RNA at the termination of protein biosynthesis. May increase the efficiency of translation by recycling ribosomes from one round of translation to another. In Staphylococcus carnosus (strain TM300), this protein is Ribosome-recycling factor.